We begin with the raw amino-acid sequence, 226 residues long: 2-C-methyl-D-erythritol 4-phosphate cytidylyltransferase (226 aa).

It belongs to the IspD/TarI cytidylyltransferase family. IspD subfamily.

The catalysed reaction is 2-C-methyl-D-erythritol 4-phosphate + CTP + H(+) = 4-CDP-2-C-methyl-D-erythritol + diphosphate. Its pathway is isoprenoid biosynthesis; isopentenyl diphosphate biosynthesis via DXP pathway; isopentenyl diphosphate from 1-deoxy-D-xylulose 5-phosphate: step 2/6. Its function is as follows. Catalyzes the formation of 4-diphosphocytidyl-2-C-methyl-D-erythritol from CTP and 2-C-methyl-D-erythritol 4-phosphate (MEP). This Bacillus cereus (strain ATCC 14579 / DSM 31 / CCUG 7414 / JCM 2152 / NBRC 15305 / NCIMB 9373 / NCTC 2599 / NRRL B-3711) protein is 2-C-methyl-D-erythritol 4-phosphate cytidylyltransferase.